Consider the following 315-residue polypeptide: DNA-directed RNA polymerase subunit alpha (315 aa).

The interval 1–228 (MIEIEKPKIE…EHLNLFIDLS (228 aa)) is alpha N-terminal domain (alpha-NTD). An alpha C-terminal domain (alpha-CTD) region spans residues 245–315 (KEKVLEMTIE…LGLSLAPSED (71 aa)).

It belongs to the RNA polymerase alpha chain family. In terms of assembly, homodimer. The RNAP catalytic core consists of 2 alpha, 1 beta, 1 beta' and 1 omega subunit. When a sigma factor is associated with the core the holoenzyme is formed, which can initiate transcription.

It catalyses the reaction RNA(n) + a ribonucleoside 5'-triphosphate = RNA(n+1) + diphosphate. DNA-dependent RNA polymerase catalyzes the transcription of DNA into RNA using the four ribonucleoside triphosphates as substrates. The sequence is that of DNA-directed RNA polymerase subunit alpha from Acetivibrio thermocellus (strain ATCC 27405 / DSM 1237 / JCM 9322 / NBRC 103400 / NCIMB 10682 / NRRL B-4536 / VPI 7372) (Clostridium thermocellum).